A 336-amino-acid chain; its full sequence is Atypical chemokine receptor 1 (336 aa).

Topologically, residues 1 to 63 (MGNCLHQAEL…CNLLDDSSLP (63 aa)) are extracellular. 2 N-linked (GlcNAc...) asparagine glycosylation sites follow: Asn16 and Asn33. 2 disulfide bridges follow: Cys51/Cys276 and Cys129/Cys195. The chain crosses the membrane as a helical span at residues 64 to 84 (FFILASVLGILASSTVLFMLF). Topologically, residues 85-95 (RPLFRWQLCPG) are cytoplasmic. Residues 96–116 (WPVLAQLAVGSALFSIVVPIL) traverse the membrane as a helical segment. Topologically, residues 117-129 (APGLGNTRSSALC) are extracellular. The helical transmembrane segment at 130–153 (SLGYCVWYGSAFAQALLLGCHASL) threads the bilayer. The Cytoplasmic segment spans residues 154–166 (GPKLGAGQVPGLT). Residues 167-187 (LGLTVGLWGAAALLTVPITLA) form a helical membrane-spanning segment. The Extracellular portion of the chain corresponds to 188–207 (SGASDGLCTPIYSTELKALQ). The helical transmembrane segment at 208–228 (ATHTVACFAIFVLLPLGLFGA) threads the bilayer. Residues 229–244 (KGVKKALGMGPGPWMT) are Cytoplasmic-facing. A helical transmembrane segment spans residues 245–265 (ILWIWFIFWWPHGVVLGLDFL). Topologically, residues 266-287 (VRSKLLLLPTCLAQQVLDLLLN) are extracellular. Residues 288-308 (LAEALTIVHCVATPLLLALFC) form a helical membrane-spanning segment. The Cytoplasmic segment spans residues 309–336 (HQATRTLLPSLPLPERWSSPVDTLGSKS).

This sequence belongs to the G-protein coupled receptor 1 family. Atypical chemokine receptor subfamily.

It is found in the early endosome. It localises to the recycling endosome. The protein resides in the membrane. Functionally, atypical chemokine receptor that controls chemokine levels and localization via high-affinity chemokine binding that is uncoupled from classic ligand-driven signal transduction cascades, resulting instead in chemokine sequestration, degradation, or transcytosis. Also known as interceptor (internalizing receptor) or chemokine-scavenging receptor or chemokine decoy receptor. Has a promiscuous chemokine-binding profile, interacting with inflammatory chemokines of both the CXC and the CC subfamilies but not with homeostatic chemokines. Acts as a receptor for chemokines including CCL2, CCL5, CCL7, CCL11, CCL13, CCL14, CCL17, CXCL5, CXCL6, IL8/CXCL8, CXCL11, GRO, RANTES, MCP-1 and TARC. May regulate chemokine bioavailability and, consequently, leukocyte recruitment through two distinct mechanisms: when expressed in endothelial cells, it sustains the abluminal to luminal transcytosis of tissue-derived chemokines and their subsequent presentation to circulating leukocytes; when expressed in erythrocytes, serves as blood reservoir of cognate chemokines but also as a chemokine sink, buffering potential surges in plasma chemokine levels. This is Atypical chemokine receptor 1 (ACKR1) from Sapajus apella (Brown-capped capuchin).